We begin with the raw amino-acid sequence, 287 residues long: Undecaprenyl-diphosphatase (287 aa).

A run of 8 helical transmembrane segments spans residues 1–21, 49–69, 101–121, 126–146, 160–180, 203–223, 232–252, and 267–287; these read MALWIAVLLGVVQGIFMFLPV, MILFNLVVHVGTLVSIVVVFA, LFLLGMLSVLFTGVVGLTLKA, VFANPWMIAFTLILTGALLFW, TGVGTATLIGVAQGFALMPGL, YSFFLAIPTICAATLLQAIEV, VSVAALITGFVVAAGVGIVSL, and FSFYVWALAAAILLGWIDLPI.

It belongs to the UppP family.

It localises to the cell inner membrane. It catalyses the reaction di-trans,octa-cis-undecaprenyl diphosphate + H2O = di-trans,octa-cis-undecaprenyl phosphate + phosphate + H(+). Functionally, catalyzes the dephosphorylation of undecaprenyl diphosphate (UPP). Confers resistance to bacitracin. This is Undecaprenyl-diphosphatase from Halorhodospira halophila (strain DSM 244 / SL1) (Ectothiorhodospira halophila (strain DSM 244 / SL1)).